Consider the following 111-residue polypeptide: Pyrimidine/purine nucleoside phosphorylase 1 (111 aa).

Belongs to the nucleoside phosphorylase PpnP family.

The catalysed reaction is a purine D-ribonucleoside + phosphate = a purine nucleobase + alpha-D-ribose 1-phosphate. The enzyme catalyses adenosine + phosphate = alpha-D-ribose 1-phosphate + adenine. It catalyses the reaction cytidine + phosphate = cytosine + alpha-D-ribose 1-phosphate. It carries out the reaction guanosine + phosphate = alpha-D-ribose 1-phosphate + guanine. The catalysed reaction is inosine + phosphate = alpha-D-ribose 1-phosphate + hypoxanthine. The enzyme catalyses thymidine + phosphate = 2-deoxy-alpha-D-ribose 1-phosphate + thymine. It catalyses the reaction uridine + phosphate = alpha-D-ribose 1-phosphate + uracil. It carries out the reaction xanthosine + phosphate = alpha-D-ribose 1-phosphate + xanthine. Catalyzes the phosphorolysis of diverse nucleosides, yielding D-ribose 1-phosphate and the respective free bases. Can use uridine, adenosine, guanosine, cytidine, thymidine, inosine and xanthosine as substrates. Also catalyzes the reverse reactions. This chain is Pyrimidine/purine nucleoside phosphorylase 1, found in Psychrobacter cryohalolentis (strain ATCC BAA-1226 / DSM 17306 / VKM B-2378 / K5).